Reading from the N-terminus, the 616-residue chain is Dihydroxy-acid dehydratase (616 aa).

Residue aspartate 81 coordinates Mg(2+). Cysteine 122 provides a ligand contact to [2Fe-2S] cluster. Residues aspartate 123 and lysine 124 each contribute to the Mg(2+) site. Residue lysine 124 is modified to N6-carboxylysine. Cysteine 195 provides a ligand contact to [2Fe-2S] cluster. Glutamate 491 is a Mg(2+) binding site. Serine 517 serves as the catalytic Proton acceptor.

Belongs to the IlvD/Edd family. As to quaternary structure, homodimer. It depends on [2Fe-2S] cluster as a cofactor. Mg(2+) serves as cofactor.

The enzyme catalyses (2R)-2,3-dihydroxy-3-methylbutanoate = 3-methyl-2-oxobutanoate + H2O. It carries out the reaction (2R,3R)-2,3-dihydroxy-3-methylpentanoate = (S)-3-methyl-2-oxopentanoate + H2O. It participates in amino-acid biosynthesis; L-isoleucine biosynthesis; L-isoleucine from 2-oxobutanoate: step 3/4. The protein operates within amino-acid biosynthesis; L-valine biosynthesis; L-valine from pyruvate: step 3/4. Functionally, functions in the biosynthesis of branched-chain amino acids. Catalyzes the dehydration of (2R,3R)-2,3-dihydroxy-3-methylpentanoate (2,3-dihydroxy-3-methylvalerate) into 2-oxo-3-methylpentanoate (2-oxo-3-methylvalerate) and of (2R)-2,3-dihydroxy-3-methylbutanoate (2,3-dihydroxyisovalerate) into 2-oxo-3-methylbutanoate (2-oxoisovalerate), the penultimate precursor to L-isoleucine and L-valine, respectively. This chain is Dihydroxy-acid dehydratase, found in Salmonella agona (strain SL483).